A 219-amino-acid chain; its full sequence is Dehydration-responsive element-binding protein 1F (219 aa).

The disordered stretch occupies residues 1 to 45 (MDTEDTSSASSSSVSPPSSPGGGHHHRLPPKRRAGRKKFRETRHP). Low complexity predominate over residues 7-16 (SSASSSSVSP). The segment covering 23–41 (GHHHRLPPKRRAGRKKFRE) has biased composition (basic residues). Residues 46 to 105 (VYRGVRARAGGSRWVCEVREPQAQARIWLGTYPTPEMAARAHDVAAIALRGERGAELNFP) constitute a DNA-binding region (AP2/ERF). The interval 134–161 (RRPPPPLALPEDPQEGTSGGGATATSGR) is disordered.

It belongs to the AP2/ERF transcription factor family. ERF subfamily. In terms of tissue distribution, mostly expressed in developing seeds and apices.

The protein resides in the nucleus. Functionally, transcriptional activator that binds specifically to the DNA sequence 5'-[AG]CCGAC-3'. Binding to the C-repeat/DRE element mediates high salinity- and dehydration-inducible transcription. This Oryza sativa subsp. indica (Rice) protein is Dehydration-responsive element-binding protein 1F (DREB1F).